The following is a 291-amino-acid chain: Probable aquaporin PIP2-4 (291 aa).

M1 carries the N-acetylmethionine modification. The segment at 1 to 22 (MAKDLDVNESGPPAARDYKDPP) is disordered. At A2 the chain carries N-acetylalanine; in Probable aquaporin PIP2-4, N-terminally processed. At 2-39 (AKDLDVNESGPPAARDYKDPPPAPFFDMEELRKWPLYR) the chain is on the cytoplasmic side. N6,N6-dimethyllysine is present on K3. Residues 40-60 (AVIAEFVATLLFLYVSILTVI) traverse the membrane as a helical segment. At 61–74 (GYKAQTDATAGGVD) the chain is on the extracellular side. A helical transmembrane segment spans residues 75–95 (CGGVGILGIAWAFGGMIFVLV). The Cytoplasmic portion of the chain corresponds to 96–125 (YCTAGISGGHINPAVTVGLFLARKVSLVRT). An NPA 1 motif is present at residues 107-109 (NPA). A helical transmembrane segment spans residues 126–146 (VLYIVAQCLGAICGCGFVKAF). Residues 147–167 (QSSYYTRYGGGANELADGYNK) are Extracellular-facing. A helical transmembrane segment spans residues 168 to 188 (GTGLGAEIIGTFVLVYTVFSA). The Cytoplasmic portion of the chain corresponds to 189 to 201 (TDPKRNARDSHVP). The chain crosses the membrane as a helical span at residues 202–222 (VLAPLPIGFAVFMVHLATIPI). Residues 223 to 249 (TGTGINPARSFGAAVIYNNEKAWDDQW) lie on the Extracellular side of the membrane. Residues 228-230 (NPA) carry the NPA 2 motif. Residues 250-270 (IFWVGPMIGAAAAAFYHQFIL) form a helical membrane-spanning segment. Topologically, residues 271–291 (RAAAIKALGSFGSFGSFRSFA) are cytoplasmic. A phosphoserine mark is found at S283, S286, and S289.

It belongs to the MIP/aquaporin (TC 1.A.8) family. PIP (TC 1.A.8.11) subfamily. As to expression, expressed in roots.

It localises to the cell membrane. Aquaporins facilitate the transport of water and small neutral solutes across cell membranes. The polypeptide is Probable aquaporin PIP2-4 (PIP2-4) (Arabidopsis thaliana (Mouse-ear cress)).